Consider the following 366-residue polypeptide: MTHTTPLLPLAPPINLVDLRYNELHNAITAFGEPPFRAKQIHEWLFSHHANSFAAMSSLPLRLREKLAERFTLQRPEVVEVQESCESGCLRPTRKILLKLSDGALIECVLIPAEERMTACLSSQAGCPMQCTFCATGTMGLQRNLSAGEIWEQLYALNGLALQEGKTITNVVFMGMGEPLLNTDNVLEAIATMSSRNYNLSLSQRKITISTVGIVPEIERLSRSGLKTKLAVSLHSARQEVRQQLMPIAAERYPLPLLSKSLEAYSKATGEAITIVYMMLNGVNDSKEDAHLLARYCRHFSCKINLIDYNPILTIRFGSVQESQKNEFQAYLMAQKFHVTVRKSYGASVNAACGQLVTQQQRRTIK.

Glutamate 107 (proton acceptor) is an active-site residue. Residues 113–342 (AEERMTACLS…MAQKFHVTVR (230 aa)) form the Radical SAM core domain. A disulfide bridge connects residues cysteine 120 and cysteine 353. Cysteine 127, cysteine 131, and cysteine 134 together coordinate [4Fe-4S] cluster. S-adenosyl-L-methionine-binding positions include 177–178 (GE), serine 210, 233–235 (SLH), and asparagine 310. The active-site S-methylcysteine intermediate is cysteine 353.

The protein belongs to the radical SAM superfamily. RlmN family. [4Fe-4S] cluster is required as a cofactor.

The protein resides in the cytoplasm. It carries out the reaction adenosine(2503) in 23S rRNA + 2 reduced [2Fe-2S]-[ferredoxin] + 2 S-adenosyl-L-methionine = 2-methyladenosine(2503) in 23S rRNA + 5'-deoxyadenosine + L-methionine + 2 oxidized [2Fe-2S]-[ferredoxin] + S-adenosyl-L-homocysteine. The catalysed reaction is adenosine(37) in tRNA + 2 reduced [2Fe-2S]-[ferredoxin] + 2 S-adenosyl-L-methionine = 2-methyladenosine(37) in tRNA + 5'-deoxyadenosine + L-methionine + 2 oxidized [2Fe-2S]-[ferredoxin] + S-adenosyl-L-homocysteine. Functionally, specifically methylates position 2 of adenine 2503 in 23S rRNA and position 2 of adenine 37 in tRNAs. The polypeptide is Probable dual-specificity RNA methyltransferase RlmN (Chlorobium chlorochromatii (strain CaD3)).